Reading from the N-terminus, the 368-residue chain is Phosphate acyltransferase (368 aa).

Residues 338 to 368 form a disordered region; it reads GDGGHDAGGAGTASPAPGHHAEPSAAQSSKA.

Belongs to the PlsX family. Homodimer. Probably interacts with PlsY.

The protein localises to the cytoplasm. The catalysed reaction is a fatty acyl-[ACP] + phosphate = an acyl phosphate + holo-[ACP]. The protein operates within lipid metabolism; phospholipid metabolism. In terms of biological role, catalyzes the reversible formation of acyl-phosphate (acyl-PO(4)) from acyl-[acyl-carrier-protein] (acyl-ACP). This enzyme utilizes acyl-ACP as fatty acyl donor, but not acyl-CoA. This is Phosphate acyltransferase from Burkholderia ambifaria (strain MC40-6).